Reading from the N-terminus, the 1407-residue chain is DNA-directed RNA polymerase subunit beta' (1407 aa).

Residues Cys-70, Cys-72, Cys-85, and Cys-88 each coordinate Zn(2+). 3 residues coordinate Mg(2+): Asp-460, Asp-462, and Asp-464. 4 residues coordinate Zn(2+): Cys-814, Cys-888, Cys-895, and Cys-898. An N6-acetyllysine modification is found at Lys-972.

This sequence belongs to the RNA polymerase beta' chain family. As to quaternary structure, the RNAP catalytic core consists of 2 alpha, 1 beta, 1 beta' and 1 omega subunit. When a sigma factor is associated with the core the holoenzyme is formed, which can initiate transcription. Mg(2+) serves as cofactor. It depends on Zn(2+) as a cofactor.

It carries out the reaction RNA(n) + a ribonucleoside 5'-triphosphate = RNA(n+1) + diphosphate. In terms of biological role, DNA-dependent RNA polymerase catalyzes the transcription of DNA into RNA using the four ribonucleoside triphosphates as substrates. This is DNA-directed RNA polymerase subunit beta' from Shigella flexneri serotype 5b (strain 8401).